A 262-amino-acid chain; its full sequence is 5'-nucleotidase SurE (262 aa).

Residues Asp11, Asp12, Ser43, and Asn101 each contribute to the a divalent metal cation site.

This sequence belongs to the SurE nucleotidase family. A divalent metal cation serves as cofactor.

It is found in the cytoplasm. The enzyme catalyses a ribonucleoside 5'-phosphate + H2O = a ribonucleoside + phosphate. Nucleotidase that shows phosphatase activity on nucleoside 5'-monophosphates. The sequence is that of 5'-nucleotidase SurE from Prochlorococcus marinus (strain NATL1A).